The sequence spans 424 residues: Proline--tRNA ligase (424 aa).

Belongs to the class-II aminoacyl-tRNA synthetase family. ProS type 2 subfamily. As to quaternary structure, homodimer.

The protein resides in the cytoplasm. The catalysed reaction is tRNA(Pro) + L-proline + ATP = L-prolyl-tRNA(Pro) + AMP + diphosphate. Catalyzes the attachment of proline to tRNA(Pro) in a two-step reaction: proline is first activated by ATP to form Pro-AMP and then transferred to the acceptor end of tRNA(Pro). The sequence is that of Proline--tRNA ligase from Ehrlichia canis (strain Jake).